Consider the following 338-residue polypeptide: Lipopolysaccharide 1,2-glucosyltransferase (338 aa).

UDP-binding positions include 33–38 and 130–131; these read GVDANY and DA. The Mg(2+) site is built by Asp130 and Asp132. 2 short sequence motifs (DXD) span residues 130-132 and 215-217; these read DAD and DQD. His264 serves as a coordination point for Mg(2+). A UDP-binding site is contributed by 264-270; it reads HYTGATK.

This sequence belongs to the glycosyltransferase 8 family. Mg(2+) is required as a cofactor.

It localises to the cell inner membrane. It catalyses the reaction UDP-glucose + [lipopolysaccharide] = UDP + D-glucosyl-[lipopolysaccharide].. It carries out the reaction alpha-D-Glc-(1-&gt;3)-[alpha-D-Gal-(1-&gt;6)]-alpha-D-Glc-(1-&gt;3)-[L-alpha-D-Hep-(1-&gt;7)]-4-O-PO3(2-)-L-alpha-D-Hep-(1-&gt;3)-4-O-PO3(2-)-L-alpha-D-Hep-(1-&gt;5)-[alpha-Kdo-(2-&gt;4)]-alpha-Kdo-(2-&gt;6)-lipid A + UDP-alpha-D-glucose = alpha-D-Glc-(1-&gt;2)-alpha-D-Glc-(1-&gt;3)-[alpha-D-Gal-(1-&gt;6)]-alpha-D-Glc-(1-&gt;3)-[L-alpha-D-Hep-(1-&gt;7)]-4-O-PO3(2-)-L-alpha-D-Hep-(1-&gt;3)-4-O-PO3(2-)-L-alpha-D-Hep-(1-&gt;5)-[alpha-Kdo-(2-&gt;4)]-alpha-Kdo-(2-&gt;6)-lipid A + UDP + H(+). It participates in bacterial outer membrane biogenesis; LPS core biosynthesis. Functionally, glucosyltransferase involved in the biosynthesis of the core oligosaccharide region of lipopolysaccharide (LPS). Catalyzes the addition of a glucose (glucose III) to the outer-core glucose II. The chain is Lipopolysaccharide 1,2-glucosyltransferase from Escherichia coli (strain K12).